Here is a 186-residue protein sequence, read N- to C-terminus: Lipid A palmitoyltransferase PagP (186 aa).

Positions 1-25 (MNVSKYVAIFFFVFIQLISVGKVFA) are cleaved as a signal peptide. Catalysis depends on residues histidine 58, aspartate 101, and serine 102.

Belongs to the lipid A palmitoyltransferase family. Homodimer.

It is found in the cell outer membrane. The enzyme catalyses lipid A (E. coli) + a 1-hexadecanoyl-2-acyl-sn-glycero-3-phosphocholine = hepta-acyl lipid A (E. coli) + a 2-acyl-sn-glycero-3-phosphocholine. It catalyses the reaction lipid IIA + a 1-hexadecanoyl-2-acyl-sn-glycero-3-phosphocholine = lipid IIB + a 2-acyl-sn-glycero-3-phosphocholine. It carries out the reaction lipid IVA (E. coli) + a 1-hexadecanoyl-2-acyl-sn-glycero-3-phosphocholine = lipid IVB (E. coli) + a 2-acyl-sn-glycero-3-phosphocholine. In terms of biological role, transfers a palmitate residue from the sn-1 position of a phospholipid to the N-linked hydroxymyristate on the proximal unit of lipid A or its precursors. This is Lipid A palmitoyltransferase PagP from Escherichia coli O6:H1 (strain CFT073 / ATCC 700928 / UPEC).